The primary structure comprises 300 residues: Diphthine methyl ester synthase (300 aa).

S-adenosyl-L-methionine-binding positions include L9, D85, G88, 113–114 (SV), L164, L222, and H247.

It belongs to the diphthine synthase family.

It is found in the cytoplasm. It carries out the reaction 2-[(3S)-amino-3-carboxypropyl]-L-histidyl-[translation elongation factor 2] + 4 S-adenosyl-L-methionine = diphthine methyl ester-[translation elongation factor 2] + 4 S-adenosyl-L-homocysteine + 3 H(+). It functions in the pathway protein modification; peptidyl-diphthamide biosynthesis. Functionally, S-adenosyl-L-methionine-dependent methyltransferase that catalyzes four methylations of the modified target histidine residue in translation elongation factor 2 (EF-2), to form an intermediate called diphthine methyl ester. The four successive methylation reactions represent the second step of diphthamide biosynthesis. The sequence is that of Diphthine methyl ester synthase (DPH5) from Yarrowia lipolytica (strain CLIB 122 / E 150) (Yeast).